A 394-amino-acid polypeptide reads, in one-letter code: Bifunctional enzyme Fae/Hps (394 aa).

Residues 1–162 are formaldehyde-activating enzyme; it reads MEFRIGEALI…YEKDRSFHPF (162 aa). His18 serves as the catalytic Proton donor. Residues Asp20, Leu49, Lys67, Thr69, and Gln84 each coordinate substrate. Residues 163–394 are 3-hexulose-6-phosphate synthase; sequence VGRKLTKLWD…TDQFRIMTDF (232 aa).

The protein in the N-terminal section; belongs to the formaldehyde-activating enzyme family. It in the C-terminal section; belongs to the HPS/KGPDC family. HPS subfamily.

It catalyses the reaction 5,6,7,8-tetrahydromethanopterin + formaldehyde = 5,10-methylenetetrahydromethanopterin + H2O. The catalysed reaction is D-ribulose 5-phosphate + formaldehyde = D-arabino-hex-3-ulose 6-phosphate. Its pathway is carbohydrate biosynthesis; D-ribose 5-phosphate biosynthesis. Its function is as follows. Catalyzes the condensation of formaldehyde with tetrahydromethanopterin (H(4)MPT) to 5,10-methylenetetrahydromethanopterin. Catalyzes the reversible formation of ribulose-5-phosphate and formaldehyde from 3-hexulose-6-phosphate. This is Bifunctional enzyme Fae/Hps from Archaeoglobus fulgidus (strain ATCC 49558 / DSM 4304 / JCM 9628 / NBRC 100126 / VC-16).